The primary structure comprises 116 residues: Ribonuclease P protein component (116 aa).

Belongs to the RnpA family. Consists of a catalytic RNA component (M1 or rnpB) and a protein subunit.

It carries out the reaction Endonucleolytic cleavage of RNA, removing 5'-extranucleotides from tRNA precursor.. In terms of biological role, RNaseP catalyzes the removal of the 5'-leader sequence from pre-tRNA to produce the mature 5'-terminus. It can also cleave other RNA substrates such as 4.5S RNA. The protein component plays an auxiliary but essential role in vivo by binding to the 5'-leader sequence and broadening the substrate specificity of the ribozyme. This is Ribonuclease P protein component from Citrifermentans bemidjiense (strain ATCC BAA-1014 / DSM 16622 / JCM 12645 / Bem) (Geobacter bemidjiensis).